Here is a 193-residue protein sequence, read N- to C-terminus: Orotate phosphoribosyltransferase (193 aa).

5-phospho-alpha-D-ribose 1-diphosphate contacts are provided by residues arginine 107, lysine 108, lysine 111, histidine 113, and 133-141; that span reads EDVITSGGS. Threonine 137 and arginine 165 together coordinate orotate.

This sequence belongs to the purine/pyrimidine phosphoribosyltransferase family. PyrE subfamily. In terms of assembly, homodimer. It depends on Mg(2+) as a cofactor.

The catalysed reaction is orotidine 5'-phosphate + diphosphate = orotate + 5-phospho-alpha-D-ribose 1-diphosphate. The protein operates within pyrimidine metabolism; UMP biosynthesis via de novo pathway; UMP from orotate: step 1/2. In terms of biological role, catalyzes the transfer of a ribosyl phosphate group from 5-phosphoribose 1-diphosphate to orotate, leading to the formation of orotidine monophosphate (OMP). The sequence is that of Orotate phosphoribosyltransferase from Rhodopirellula baltica (strain DSM 10527 / NCIMB 13988 / SH1).